Consider the following 79-residue polypeptide: MGNIYTKDIKRIVKEIYDRYKDEIKDDYNTNKQIVIRYVDVKSKKVRNRIAGYLTRYYKIMKEKETSPAEEKEEISEEI.

This sequence belongs to the eukaryotic ribosomal protein eS17 family.

The chain is Small ribosomal subunit protein eS17 from Saccharolobus solfataricus (strain ATCC 35092 / DSM 1617 / JCM 11322 / P2) (Sulfolobus solfataricus).